The following is a 95-amino-acid chain: Small ribosomal subunit protein bS6 (95 aa).

Belongs to the bacterial ribosomal protein bS6 family.

Its function is as follows. Binds together with bS18 to 16S ribosomal RNA. The protein is Small ribosomal subunit protein bS6 of Clostridium kluyveri (strain NBRC 12016).